The following is an 874-amino-acid chain: Valine--tRNA ligase (874 aa).

The 'HIGH' region motif lies at 42–52 (PNITGRIHIGH). The 'KMSKS' region signature appears at 522–526 (KMSKS). ATP is bound at residue K525. The stretch at 806–874 (DYIDIDTEKQ…KLQALLKEIS (69 aa)) forms a coiled coil.

The protein belongs to the class-I aminoacyl-tRNA synthetase family. ValS type 1 subfamily. In terms of assembly, monomer.

The protein localises to the cytoplasm. It carries out the reaction tRNA(Val) + L-valine + ATP = L-valyl-tRNA(Val) + AMP + diphosphate. Functionally, catalyzes the attachment of valine to tRNA(Val). As ValRS can inadvertently accommodate and process structurally similar amino acids such as threonine, to avoid such errors, it has a 'posttransfer' editing activity that hydrolyzes mischarged Thr-tRNA(Val) in a tRNA-dependent manner. This chain is Valine--tRNA ligase, found in Petrotoga mobilis (strain DSM 10674 / SJ95).